The primary structure comprises 417 residues: Multifunctional CCA protein (417 aa).

ATP is bound by residues glycine 8 and arginine 11. The CTP site is built by glycine 8 and arginine 11. Aspartate 21 and aspartate 23 together coordinate Mg(2+). Positions 91, 143, and 146 each coordinate ATP. Positions 91, 143, and 146 each coordinate CTP. The HD domain maps to 232-333 (TGVHVMMVVD…VRLFERSDAL (102 aa)).

Belongs to the tRNA nucleotidyltransferase/poly(A) polymerase family. Bacterial CCA-adding enzyme type 1 subfamily. Monomer. Can also form homodimers and oligomers. The cofactor is Mg(2+). Ni(2+) serves as cofactor.

It carries out the reaction a tRNA precursor + 2 CTP + ATP = a tRNA with a 3' CCA end + 3 diphosphate. The catalysed reaction is a tRNA with a 3' CCA end + 2 CTP + ATP = a tRNA with a 3' CCACCA end + 3 diphosphate. Catalyzes the addition and repair of the essential 3'-terminal CCA sequence in tRNAs without using a nucleic acid template. Adds these three nucleotides in the order of C, C, and A to the tRNA nucleotide-73, using CTP and ATP as substrates and producing inorganic pyrophosphate. tRNA 3'-terminal CCA addition is required both for tRNA processing and repair. Also involved in tRNA surveillance by mediating tandem CCA addition to generate a CCACCA at the 3' terminus of unstable tRNAs. While stable tRNAs receive only 3'-terminal CCA, unstable tRNAs are marked with CCACCA and rapidly degraded. The polypeptide is Multifunctional CCA protein (Paraburkholderia phymatum (strain DSM 17167 / CIP 108236 / LMG 21445 / STM815) (Burkholderia phymatum)).